We begin with the raw amino-acid sequence, 988 residues long: uncharacterized protein (988 aa).

A signal peptide spans 1 to 17 (MIRLVFLFLLVVLSVEL). The segment at 111–176 (YQNPSTFPST…SKLNQKSSKS (66 aa)) is disordered. Positions 114-140 (PSTFPSTTTASTTTSTTTMPPTYQTTT) are enriched in low complexity. Asn-247, Asn-389, Asn-529, and Asn-601 each carry an N-linked (GlcNAc...) asparagine glycan. A helical membrane pass occupies residues 690 to 710 (IMIFTIFSVLSALTCLMCMYL). Asn-720 carries N-linked (GlcNAc...) asparagine glycosylation. A run of 6 helical transmembrane segments spans residues 721 to 741 (LTAV…AFII), 753 to 773 (LLFP…TVLI), 784 to 804 (VLIA…WLLL), 832 to 852 (MILL…IFAL), 864 to 884 (LMIS…LPLI), and 891 to 911 (TVMA…SHTG). Residues 966–988 (RSEDTLRRNTSLYGTEGYELPTP) are disordered. The N-linked (GlcNAc...) asparagine glycan is linked to Asn-974.

The protein resides in the membrane. This is an uncharacterized protein from Caenorhabditis elegans.